The chain runs to 396 residues: Cell division protein DivIB (396 aa).

Disordered stretches follow at residues 1–23 and 37–116; these read MSKDKKNEDKETLEELKELSEWQ and EVAL…ATKE. At 1–130 the chain is on the cytoplasmic side; it reads MSKDKKNEDK…AKIPGIHILR (130 aa). Composition is skewed to basic and acidic residues over residues 37–65 and 75–116; these read EVALAEEKEKERQARMGEESEKSEDKQDQ and ESAK…ATKE. The chain crosses the membrane as a helical span at residues 131-151; it reads AFTILFPSLLLLIVSAYLLSP. At 152–396 the chain is on the extracellular side; the sequence is YATMKDIRVE…NQTNQRSSRR (245 aa). Residues 153–223 enclose the POTRA domain; sequence ATMKDIRVEG…TKFTIKVKEY (71 aa). A compositionally biased stretch (basic and acidic residues) spans 361 to 385; it reads KAKQEAKEAEKKQEEEQKKQEEESN. Residues 361–396 form a disordered region; that stretch reads KAKQEAKEAEKKQEEEQKKQEEESNRNQTNQRSSRR. Low complexity predominate over residues 386-396; that stretch reads RNQTNQRSSRR.

The protein belongs to the FtsQ/DivIB family. DivIB subfamily.

The protein localises to the cell membrane. Cell division protein that may be involved in stabilizing or promoting the assembly of the division complex. This Streptococcus pneumoniae (strain ATCC BAA-255 / R6) protein is Cell division protein DivIB.